The primary structure comprises 93 residues: Integration host factor subunit beta (93 aa).

It belongs to the bacterial histone-like protein family. As to quaternary structure, heterodimer of an alpha and a beta chain.

Its function is as follows. This protein is one of the two subunits of integration host factor, a specific DNA-binding protein that functions in genetic recombination as well as in transcriptional and translational control. The sequence is that of Integration host factor subunit beta from Aliivibrio fischeri (strain ATCC 700601 / ES114) (Vibrio fischeri).